A 368-amino-acid polypeptide reads, in one-letter code: GDP-fucose transporter 1 (368 aa).

9 helical membrane-spanning segments follow: residues 64–84 (LSTI…LVFL), 98–118 (LFIT…MTSI), 141–161 (VLPV…CLEY), 166–186 (FYQV…YIVL), 195–215 (TMAC…EVNF), 217–237 (WLGI…SIAV), 251–271 (LSIY…LVSG), 287–307 (FWFY…SVFM), and 332–352 (AVVF…LLVI).

The protein belongs to the TPT transporter family. SLC35C subfamily.

Its subcellular location is the golgi apparatus membrane. It carries out the reaction GMP(out) + GDP-beta-L-fucose(in) = GMP(in) + GDP-beta-L-fucose(out). In terms of biological role, antiporter specific for GDP-l-fucose and depending on the concomitant reverse transport of GMP. Involved in GDP-fucose import from the cytoplasm into the Golgi lumen. This is GDP-fucose transporter 1 (slc35c1) from Dictyostelium discoideum (Social amoeba).